The sequence spans 198 residues: Recombination protein RecR (198 aa).

A C4-type zinc finger spans residues 57–72 (CSECGHITEQDPCYIC). The region spanning 80–175 (SVICVVEDDK…TVTRLAQGLS (96 aa)) is the Toprim domain.

The protein belongs to the RecR family.

Its function is as follows. May play a role in DNA repair. It seems to be involved in an RecBC-independent recombinational process of DNA repair. It may act with RecF and RecO. This chain is Recombination protein RecR, found in Staphylococcus saprophyticus subsp. saprophyticus (strain ATCC 15305 / DSM 20229 / NCIMB 8711 / NCTC 7292 / S-41).